Reading from the N-terminus, the 76-residue chain is U-actitoxin-Avd8c (76 aa).

The first 16 residues, 1–16 (LVIVFVVLLGVPLISA), serve as a signal peptide directing secretion. A propeptide spanning residues 17–33 (NEEELLAILQDQRNDAR) is cleaved from the precursor.

The protein belongs to the sea anemone 8 toxin family.

The protein localises to the secreted. It localises to the nematocyst. The chain is U-actitoxin-Avd8c from Anemonia viridis (Snakelocks anemone).